The sequence spans 576 residues: Catalase-peroxidase (576 aa).

Positions 95-224 form a cross-link, tryptophyl-tyrosyl-methioninium (Trp-Tyr) (with M-250); sequence WHAAGSYRAA…LAAVQMGLIY (130 aa). His-96 serves as the catalytic Proton acceptor. The tryptophyl-tyrosyl-methioninium (Tyr-Met) (with W-95) cross-link spans 224-250; the sequence is YVNPEGVNGQPDPARTALHIRETFARM. His-265 is a binding site for heme b.

Belongs to the peroxidase family. Peroxidase/catalase subfamily. As to quaternary structure, homotetramer. The cofactor is heme b. Formation of the three residue Trp-Tyr-Met cross-link is important for the catalase, but not the peroxidase activity of the enzyme.

The catalysed reaction is H2O2 + AH2 = A + 2 H2O. The enzyme catalyses 2 H2O2 = O2 + 2 H2O. In terms of biological role, bifunctional enzyme with both catalase and broad-spectrum peroxidase activity. Also displays NADH oxidase, INH lyase and isonicotinoyl-NAD synthase activities. Important for stationary phase survival. The sequence is that of Catalase-peroxidase (katG) from Rhodobacter capsulatus (Rhodopseudomonas capsulata).